The sequence spans 233 residues: Ribosomal RNA small subunit methyltransferase G (233 aa).

Residues glycine 96, leucine 101, 146–147, and arginine 160 contribute to the S-adenosyl-L-methionine site; that span reads LE.

It belongs to the methyltransferase superfamily. RNA methyltransferase RsmG family.

Its subcellular location is the cytoplasm. The enzyme catalyses guanosine(527) in 16S rRNA + S-adenosyl-L-methionine = N(7)-methylguanosine(527) in 16S rRNA + S-adenosyl-L-homocysteine. In terms of biological role, specifically methylates the N7 position of guanine in position 527 of 16S rRNA. This Sphingopyxis alaskensis (strain DSM 13593 / LMG 18877 / RB2256) (Sphingomonas alaskensis) protein is Ribosomal RNA small subunit methyltransferase G.